Reading from the N-terminus, the 243-residue chain is MSDWLFDLGNSRFKFAPLQGDRAGDVQAWAHGAEGMAGQPPHSLPSGTTAFVASVAAPSLTSAMLDQLQRRFEHVHVVRTSAECAGVRIAYAKPEKFGVDRFLALLAAAKAQRPVLVVGVGTALTIDLLDANGQHHGGRISASPTTMREALHARAVQLPATGGDYSEFANDTADALASGCDGAAVALIERSAQQAHALLGVAPSLLVHGGGAPALMPLLPGADYHPSLVLDGLARWAVHQPAG.

7–14 (DLGNSRFK) is an ATP binding site. Substrate is bound by residues tyrosine 91 and 98-101 (GVDR). Catalysis depends on aspartate 100, which acts as the Proton acceptor. Threonine 122 lines the ATP pocket. Position 172 (threonine 172) interacts with substrate.

It belongs to the type III pantothenate kinase family. Homodimer. NH4(+) is required as a cofactor. It depends on K(+) as a cofactor.

The protein localises to the cytoplasm. It catalyses the reaction (R)-pantothenate + ATP = (R)-4'-phosphopantothenate + ADP + H(+). It functions in the pathway cofactor biosynthesis; coenzyme A biosynthesis; CoA from (R)-pantothenate: step 1/5. Functionally, catalyzes the phosphorylation of pantothenate (Pan), the first step in CoA biosynthesis. This chain is Type III pantothenate kinase, found in Stenotrophomonas maltophilia (strain R551-3).